A 149-amino-acid polypeptide reads, in one-letter code: Arginine regulator (149 aa).

This sequence belongs to the ArgR family.

The protein resides in the cytoplasm. It participates in amino-acid degradation; L-arginine degradation via ADI pathway. Its function is as follows. Regulates the transcription of the arc operon, involved in arginine catabolism. In Bacillus cereus (strain ATCC 10987 / NRS 248), this protein is Arginine regulator (argR1).